A 170-amino-acid chain; its full sequence is Ureidoglycolate lyase (170 aa).

Belongs to the ureidoglycolate lyase family. In terms of assembly, homodimer. Requires Ni(2+) as cofactor.

It catalyses the reaction (S)-ureidoglycolate = urea + glyoxylate. Its pathway is nitrogen metabolism; (S)-allantoin degradation. Catalyzes the catabolism of the allantoin degradation intermediate (S)-ureidoglycolate, generating urea and glyoxylate. Involved in the utilization of allantoin as nitrogen source. The polypeptide is Ureidoglycolate lyase (Pseudomonas syringae pv. syringae (strain B728a)).